The primary structure comprises 983 residues: Type IV secretion system protein CagE (983 aa).

Position 597–604 (597–604) interacts with ATP; sequence GSTGSGKT.

Belongs to the TrbE/VirB4 family. Component of the Cag type IV secretion system, which is composed of a wheel-shaped outer membrane complex (OMC) and an inner membrane complex (IMC). Interacts with CagV and CagBeta.

Its subcellular location is the cell inner membrane. The enzyme catalyses ATP + H2O + cellular proteinSide 1 = ADP + phosphate + cellular proteinSide 2.. In terms of biological role, ATPase component of the type IV secretion system Cag (Cag-T4SS). Acts as a molecular motor to provide the energy that is required for the export of proteins. Required for CagA translocation and induction of IL-8 in host gastric epithelial cells. Plays a key role in Cag-T4SS pilus biogenesis, especially in the localization and stabilization of the pilus-associated components CagI, CagL and the surface protein CagH. Is also critical for assembly of the entire cytoplasmic portion of the Cag inner membrane complex (IMC). In Helicobacter pylori (strain ATCC 700392 / 26695) (Campylobacter pylori), this protein is Type IV secretion system protein CagE.